Consider the following 499-residue polypeptide: Importin subunit alpha-8 (499 aa).

One can recognise an IBB domain in the interval M1–M57. ARM repeat units lie at residues T101–S141, S144–G183, A186–R226, D229–K268, K271–A310, D313–A352, P354–T393, and Q397–Q436.

It belongs to the importin alpha family. Binds to importin subunit beta-1/KPNB1 via the IBB domain; this complex dissociates in the presence of RAN-GTP. Shows a limited binding to the RB1 nuclear localization signal (NLS), but not to the SV40, nor NPM1 NLSs. Interacts with RSL1D1. Expressed predominantly in ovary. Isoform 1 is the predominant form.

It localises to the nucleus. In terms of biological role, functions in nuclear protein import. The protein is Importin subunit alpha-8 (Kpna7) of Mus musculus (Mouse).